We begin with the raw amino-acid sequence, 384 residues long: 8-amino-7-oxononanoate synthase (384 aa).

Position 21 (Arg-21) interacts with substrate. Gly-108–Phe-109 provides a ligand contact to pyridoxal 5'-phosphate. His-133 is a substrate binding site. Pyridoxal 5'-phosphate contacts are provided by Ser-179, His-207, and Thr-233. Lys-236 carries the post-translational modification N6-(pyridoxal phosphate)lysine. Thr-352 contacts substrate.

The protein belongs to the class-II pyridoxal-phosphate-dependent aminotransferase family. BioF subfamily. Homodimer. Requires pyridoxal 5'-phosphate as cofactor.

The enzyme catalyses 6-carboxyhexanoyl-[ACP] + L-alanine + H(+) = (8S)-8-amino-7-oxononanoate + holo-[ACP] + CO2. The protein operates within cofactor biosynthesis; biotin biosynthesis. In terms of biological role, catalyzes the decarboxylative condensation of pimeloyl-[acyl-carrier protein] and L-alanine to produce 8-amino-7-oxononanoate (AON), [acyl-carrier protein], and carbon dioxide. This chain is 8-amino-7-oxononanoate synthase, found in Shigella boydii serotype 18 (strain CDC 3083-94 / BS512).